The following is a 467-amino-acid chain: Envelope glycoprotein M (467 aa).

Over 1-32 (MGRRAPRGSPEAAPGADVAPGARAAWWVWCVQ) the chain is Intravirion. The helical transmembrane segment at 33–53 (VATFIVSAICVVGLLVLASVF) threads the bilayer. The Virion surface segment spans residues 54-90 (RDRFPCLYAPATSYAKANATVEVRGGVAVPLRLDTQS). A helical transmembrane segment spans residues 91–111 (LLATYAITSTLLLAAAVYAAV). Residues 112 to 137 (GAVTSRYERALDAARRLAAARMAMPH) lie on the Intravirion side of the membrane. A helical transmembrane segment spans residues 138–158 (ATLIAGNVCAWLLQITVLLLA). The Virion surface portion of the chain corresponds to 159–163 (HRISQ). A helical transmembrane segment spans residues 164-184 (LAHLIYVLHFACLVYLAAHFC). Topologically, residues 185–220 (TRGVLSGTYLRQVHGLIDPAPTHHRIVGPVRAVMTN) are intravirion. A helical transmembrane segment spans residues 221–241 (ALLLGTLLCTAAAAVSLNTIA). Residues 242-250 (ALNFNFSAP) lie on the Virion surface side of the membrane. Residues 251-271 (SMLICLTTLFALLVVSLLLVV) form a helical membrane-spanning segment. Residues 272–280 (EGVLCHYVR) lie on the Intravirion side of the membrane. The chain crosses the membrane as a helical span at residues 281 to 301 (VLVGPHLGAIAATGIVGLACE). The Virion surface segment spans residues 302–318 (HYHTGGYYVVEQQWPGA). The chain crosses the membrane as a helical span at residues 319–339 (QTGVRVALALVAAFALAMAVL). The Intravirion segment spans residues 340–467 (RCTRAYLYHR…EPVYSTVRRW (128 aa)). Basic residues predominate over residues 371-381 (RRVRSSMRGSR). 2 disordered regions span residues 371-395 (RRVR…AETP) and 432-459 (VQRP…AGEP).

The protein belongs to the herpesviridae glycoprotein M family. As to quaternary structure, interacts (via N-terminus) with gN (via N-terminus). The gM-gN heterodimer forms the gCII complex.

Its subcellular location is the virion membrane. It localises to the host Golgi apparatus. The protein localises to the host trans-Golgi network. The protein resides in the host endosome membrane. It is found in the host nucleus inner membrane. Its function is as follows. Envelope glycoprotein important for virion assembly and egress. Plays a role in the correct incorporation of gH-gL into virion membrane. Directs the glycoprotein N (gN) to the host trans-Golgi network. This is Envelope glycoprotein M from Human herpesvirus 2 (strain HG52) (HHV-2).